A 122-amino-acid polypeptide reads, in one-letter code: Large ribosomal subunit protein uL14 (122 aa).

This sequence belongs to the universal ribosomal protein uL14 family. As to quaternary structure, part of the 50S ribosomal subunit. Forms a cluster with proteins L3 and L19. In the 70S ribosome, L14 and L19 interact and together make contacts with the 16S rRNA in bridges B5 and B8.

In terms of biological role, binds to 23S rRNA. Forms part of two intersubunit bridges in the 70S ribosome. The protein is Large ribosomal subunit protein uL14 of Streptococcus gordonii (strain Challis / ATCC 35105 / BCRC 15272 / CH1 / DL1 / V288).